Here is a 624-residue protein sequence, read N- to C-terminus: Probable potassium transport system protein Kup 2 (624 aa).

The next 12 membrane-spanning stretches (helical) occupy residues 14–34 (LSFA…LYAF), 51–71 (ILSL…LVIV), 97–117 (GGWL…DGML), 133–153 (LSPN…FFLF), 163–183 (IGVY…ILGF), 211–231 (SALF…ALFA), 245–265 (WFAV…AFVL), 283–303 (FLPV…QAII), 335–355 (VYLP…VVIF), 364–384 (AYGI…GIIA), 393–413 (FKIL…AGNI), and 416–436 (LLTG…VMYT).

It belongs to the HAK/KUP transporter (TC 2.A.72) family.

The protein resides in the cell inner membrane. It catalyses the reaction K(+)(in) + H(+)(in) = K(+)(out) + H(+)(out). In terms of biological role, transport of potassium into the cell. Likely operates as a K(+):H(+) symporter. The polypeptide is Probable potassium transport system protein Kup 2 (Legionella pneumophila (strain Lens)).